Here is a 194-residue protein sequence, read N- to C-terminus: ATP-dependent Clp protease proteolytic subunit (194 aa).

Residue Ser-97 is the Nucleophile of the active site. His-122 is a catalytic residue.

The protein belongs to the peptidase S14 family. Fourteen ClpP subunits assemble into 2 heptameric rings which stack back to back to give a disk-like structure with a central cavity, resembling the structure of eukaryotic proteasomes.

It localises to the cytoplasm. It catalyses the reaction Hydrolysis of proteins to small peptides in the presence of ATP and magnesium. alpha-casein is the usual test substrate. In the absence of ATP, only oligopeptides shorter than five residues are hydrolyzed (such as succinyl-Leu-Tyr-|-NHMec, and Leu-Tyr-Leu-|-Tyr-Trp, in which cleavage of the -Tyr-|-Leu- and -Tyr-|-Trp bonds also occurs).. Functionally, cleaves peptides in various proteins in a process that requires ATP hydrolysis. Has a chymotrypsin-like activity. Plays a major role in the degradation of misfolded proteins. The protein is ATP-dependent Clp protease proteolytic subunit of Thermus thermophilus (strain ATCC BAA-163 / DSM 7039 / HB27).